The primary structure comprises 113 residues: UPF0342 protein MGAS10750_Spy0713 (113 aa).

This sequence belongs to the UPF0342 family.

This chain is UPF0342 protein MGAS10750_Spy0713, found in Streptococcus pyogenes serotype M4 (strain MGAS10750).